The sequence spans 289 residues: ATP phosphoribosyltransferase (289 aa).

The protein belongs to the ATP phosphoribosyltransferase family. Long subfamily. It depends on Mg(2+) as a cofactor.

The protein resides in the cytoplasm. It carries out the reaction 1-(5-phospho-beta-D-ribosyl)-ATP + diphosphate = 5-phospho-alpha-D-ribose 1-diphosphate + ATP. It functions in the pathway amino-acid biosynthesis; L-histidine biosynthesis; L-histidine from 5-phospho-alpha-D-ribose 1-diphosphate: step 1/9. With respect to regulation, feedback inhibited by histidine. Its function is as follows. Catalyzes the condensation of ATP and 5-phosphoribose 1-diphosphate to form N'-(5'-phosphoribosyl)-ATP (PR-ATP). Has a crucial role in the pathway because the rate of histidine biosynthesis seems to be controlled primarily by regulation of HisG enzymatic activity. This is ATP phosphoribosyltransferase from Methanosarcina barkeri (strain Fusaro / DSM 804).